An 844-amino-acid chain; its full sequence is Eukaryotic translation elongation factor 2 (844 aa).

One can recognise a tr-type G domain in the interval 17–348 (RNIRNMSVIA…MIAIHLPSPV (332 aa)). 26-33 (AHVDHGKS) lines the GTP pocket. Threonine 57 and threonine 59 each carry phosphothreonine. GTP contacts are provided by residues 162 to 165 (NKMD) and 219 to 221 (SGL). At histidine 701 the chain carries Diphthamide.

It belongs to the TRAFAC class translation factor GTPase superfamily. Classic translation factor GTPase family. EF-G/EF-2 subfamily. Phosphorylation by EF-2 kinase completely inactivates eEF2.

The protein resides in the cytoplasm. The enzyme catalyses GTP + H2O = GDP + phosphate + H(+). Catalyzes the GTP-dependent ribosomal translocation step during translation elongation. During this step, the ribosome changes from the pre-translocational (PRE) to the post-translocational (POST) state as the newly formed A-site-bound peptidyl-tRNA and P-site-bound deacylated tRNA move to the P and E sites, respectively. Catalyzes the coordinated movement of the two tRNA molecules, the mRNA and conformational changes in the ribosome. This Drosophila melanogaster (Fruit fly) protein is Eukaryotic translation elongation factor 2.